A 144-amino-acid polypeptide reads, in one-letter code: Protein E6 (144 aa).

Zinc fingers lie at residues 33 to 69 and 105 to 140; these read CKFC…CQYC and CLGC…CSLC.

It belongs to the papillomaviridae E6 protein family. In terms of assembly, forms homodimers. Interacts with ubiquitin-protein ligase UBE3A/E6-AP; this interaction stimulates UBE3A ubiquitin activity. Interacts with host BAK1.

It is found in the host cytoplasm. Its subcellular location is the host nucleus. Plays a major role in the induction and maintenance of cellular transformation. E6 associates with host UBE3A/E6-AP ubiquitin-protein ligase and modulates its activity. Protects host keratinocytes from apoptosis by mediating the degradation of host BAK1. May also inhibit host immune response. The protein is Protein E6 of Canine oral papillomavirus (strain Y62) (COPV).